The following is a 176-amino-acid chain: Large ribosomal subunit protein uL6 (176 aa).

This sequence belongs to the universal ribosomal protein uL6 family. In terms of assembly, part of the 50S ribosomal subunit.

In terms of biological role, this protein binds to the 23S rRNA, and is important in its secondary structure. It is located near the subunit interface in the base of the L7/L12 stalk, and near the tRNA binding site of the peptidyltransferase center. The sequence is that of Large ribosomal subunit protein uL6 from Paraburkholderia phytofirmans (strain DSM 17436 / LMG 22146 / PsJN) (Burkholderia phytofirmans).